The following is a 94-amino-acid chain: Long neurotoxin LNTX37 (94 aa).

The signal sequence occupies residues 1–21 (MKTLLLTLVVVTIMCLDLGYT). 5 disulfide bridges follow: Cys-24/Cys-43, Cys-36/Cys-64, Cys-49/Cys-53, Cys-68/Cys-79, and Cys-80/Cys-85.

The protein belongs to the three-finger toxin family. Long-chain subfamily. Type II alpha-neurotoxin sub-subfamily. As to expression, expressed by the venom gland.

The protein localises to the secreted. Functionally, binds with high affinity to muscular (alpha-1/CHRNA1) and neuronal (alpha-7/CHRNA7) nicotinic acetylcholine receptor (nAChR) and inhibits acetylcholine from binding to the receptor, thereby impairing neuromuscular and neuronal transmission. The protein is Long neurotoxin LNTX37 of Ophiophagus hannah (King cobra).